Reading from the N-terminus, the 340-residue chain is Glyceraldehyde-3-phosphate dehydrogenase (340 aa).

NAD(+) contacts are provided by residues 11 to 12 (TI) and glycine 109. 138-140 (SCN) lines the D-glyceraldehyde 3-phosphate pocket. Catalysis depends on cysteine 139, which acts as the Nucleophile. Arginine 167 lines the NAD(+) pocket. 193-194 (HA) is a D-glyceraldehyde 3-phosphate binding site. Glutamine 300 serves as a coordination point for NAD(+).

Belongs to the glyceraldehyde-3-phosphate dehydrogenase family. As to quaternary structure, homotetramer.

Its subcellular location is the cytoplasm. It catalyses the reaction D-glyceraldehyde 3-phosphate + phosphate + NADP(+) = (2R)-3-phospho-glyceroyl phosphate + NADPH + H(+). The catalysed reaction is D-glyceraldehyde 3-phosphate + phosphate + NAD(+) = (2R)-3-phospho-glyceroyl phosphate + NADH + H(+). The protein operates within carbohydrate degradation; glycolysis; pyruvate from D-glyceraldehyde 3-phosphate: step 1/5. The polypeptide is Glyceraldehyde-3-phosphate dehydrogenase (Saccharolobus islandicus (strain Y.N.15.51 / Yellowstone #2) (Sulfolobus islandicus)).